Consider the following 1158-residue polypeptide: Teashirt homolog 1 (1158 aa).

Disordered regions lie at residues 70-126 (DDGR…DMDT), 170-228 (INST…ANNG), and 310-341 (TGHY…EMEG). Positions 76–88 (LSYQNSPLSNGTN) are enriched in polar residues. 2 stretches are compositionally biased toward low complexity: residues 186–205 (SHAS…ASAS) and 213–228 (SSNS…ANNG). 2 C2H2-type zinc fingers span residues 288–312 (FRCK…ETGH) and 349–373 (LKCM…KTKH). A compositionally biased stretch (basic and acidic residues) spans 310-326 (TGHYRDDNKDKEEDRGK). Residues 405 to 425 (PCSPDSISSTPGIPLAETAPT) form a disordered region. Residues 461–485 (LKCMECGSSHDTLQQLTAHMMVTGH) form a C2H2-type 3 zinc finger. Disordered regions lie at residues 516 to 573 (PPTT…VEKS), 656 to 681 (LKSL…NHKS), and 693 to 748 (VTGK…VDKD). Residues 555–573 (EEKKIKQEKEDPSERVEKS) are compositionally biased toward basic and acidic residues. A compositionally biased stretch (low complexity) spans 656–671 (LKSLTSDSSTLIHSPS). 2 stretches are compositionally biased toward basic and acidic residues: residues 693–716 (VTGK…KHLT) and 724–748 (LKER…VDKD). A DNA-binding region (homeobox) is located at residues 963–1033 (RKGRQSNWNP…NVKYQLRRTG (71 aa)). 2 C2H2-type zinc fingers span residues 1048–1070 (FLCS…LESH) and 1115–1138 (FQCK…SKTH).

The protein belongs to the teashirt C2H2-type zinc-finger protein family.

Its subcellular location is the nucleus. Probable transcriptional regulator involved in developmental processes. May act as a transcriptional repressor (Potential). The protein is Teashirt homolog 1 (tshz1) of Danio rerio (Zebrafish).